We begin with the raw amino-acid sequence, 275 residues long: 3-methyl-2-oxobutanoate hydroxymethyltransferase (275 aa).

Aspartate 51 and aspartate 90 together coordinate Mg(2+). 3-methyl-2-oxobutanoate-binding positions include 51–52 (DS), aspartate 90, and lysine 120. Glutamate 122 is a binding site for Mg(2+). Catalysis depends on glutamate 189, which acts as the Proton acceptor.

The protein belongs to the PanB family. Homodecamer; pentamer of dimers. The cofactor is Mg(2+).

It localises to the cytoplasm. It carries out the reaction 3-methyl-2-oxobutanoate + (6R)-5,10-methylene-5,6,7,8-tetrahydrofolate + H2O = 2-dehydropantoate + (6S)-5,6,7,8-tetrahydrofolate. The protein operates within cofactor biosynthesis; (R)-pantothenate biosynthesis; (R)-pantoate from 3-methyl-2-oxobutanoate: step 1/2. In terms of biological role, catalyzes the reversible reaction in which hydroxymethyl group from 5,10-methylenetetrahydrofolate is transferred onto alpha-ketoisovalerate to form ketopantoate. This chain is 3-methyl-2-oxobutanoate hydroxymethyltransferase, found in Caulobacter vibrioides (strain ATCC 19089 / CIP 103742 / CB 15) (Caulobacter crescentus).